The following is a 401-amino-acid chain: Phosphoglycerate kinase (401 aa).

Residues 20–22 (DFN), Arg35, 58–61 (HLGR), Arg117, and Arg154 each bind substrate. ATP-binding positions include Lys204, Gly298, Glu329, and 358-361 (GGDS).

The protein belongs to the phosphoglycerate kinase family. Monomer.

It is found in the cytoplasm. It carries out the reaction (2R)-3-phosphoglycerate + ATP = (2R)-3-phospho-glyceroyl phosphate + ADP. Its pathway is carbohydrate degradation; glycolysis; pyruvate from D-glyceraldehyde 3-phosphate: step 2/5. In Bifidobacterium longum subsp. infantis (strain ATCC 15697 / DSM 20088 / JCM 1222 / NCTC 11817 / S12), this protein is Phosphoglycerate kinase.